The sequence spans 221 residues: Glutathione S-transferase (221 aa).

The GST N-terminal domain occupies 3 to 83 (GKPVLHYANT…YIAGKYNLYG (81 aa)). Glutathione is bound by residues Tyr9, Lys45, 54 to 55 (QV), and 67 to 68 (QT). The region spanning 85–208 (DLKERALIDM…QPGSQRKPRL (124 aa)) is the GST C-terminal domain.

Belongs to the GST superfamily. Alpha family. In terms of assembly, homodimer or heterodimer of GSTA1 and GSTA2.

The catalysed reaction is RX + glutathione = an S-substituted glutathione + a halide anion + H(+). The enzyme catalyses prostaglandin A2 + glutathione = prostaglandin A2-S-(R)-glutathione. It catalyses the reaction prostaglandin J2 + glutathione = prostaglandin J2-S-(R)-glutathione. It carries out the reaction (13S)-hydroperoxy-(9Z,11E)-octadecadienoate + 2 glutathione = (13S)-hydroxy-(9Z,11E)-octadecadienoate + glutathione disulfide + H2O. The catalysed reaction is androst-5-ene-3,17-dione = androst-4-ene-3,17-dione. Glutathione S-transferase that catalyzes the nucleophilic attack of the sulfur atom of glutathione on the electrophilic groups of a wide range of exogenous and endogenous compounds. Involved in the formation of glutathione conjugates of both prostaglandin A2 (PGA2) and prostaglandin J2 (PGJ2). It also catalyzes the isomerization of D5-androstene-3,17-dione (AD) into D4-androstene-3,17-dione and may therefore play an important role in hormone biosynthesis. Through its glutathione-dependent peroxidase activity toward the fatty acid hydroperoxide (13S)-hydroperoxy-(9Z,11E)-octadecadienoate/13-HPODE it is also involved in the metabolism of oxidized linoleic acid. This chain is Glutathione S-transferase, found in Gallus gallus (Chicken).